The chain runs to 780 residues: Protein AMEIOTIC 1 (780 aa).

Disordered regions lie at residues 32–60 and 237–327; these read KKKT…SPLS and APKE…RWSA. Residues 50 to 60 are compositionally biased toward polar residues; it reads DSTIQPRSPLS. Basic and acidic residues-rich tracts occupy residues 263-291 and 309-327; these read EVKR…EGKK and RTVE…RWSA. A coiled-coil region spans residues 448 to 547; that stretch reads VEELTEEVNG…LEEQVTYLSS (100 aa).

It is found in the nucleus. The protein localises to the chromosome. In terms of biological role, plays a fundamental role in building the proper chromosome structure at the beginning of meiosis in male meiocytes. Required for the transition from leptotene to zygotene in meiocytes. Required for homologous chromosome pairing, and initiation and progression of meiotic recombination. Regulates meiocyte cytoskeleton organization. This chain is Protein AMEIOTIC 1, found in Zea mays (Maize).